A 110-amino-acid polypeptide reads, in one-letter code: Ribonuclease (110 aa).

Glu73 acts as the Proton acceptor in catalysis. His102 acts as the Proton donor in catalysis.

This sequence belongs to the ribonuclease N1/T1 family.

The protein resides in the secreted. Functionally, hydrolyzes phosphodiester bonds in RNA, poly- and oligoribonucleotides resulting in 3'-nucleoside monophosphates via 2',3'-cyclophosphate intermediates. The chain is Ribonuclease from Niallia circulans (Bacillus circulans).